A 503-amino-acid polypeptide reads, in one-letter code: Cobyric acid synthase (503 aa).

The 190-residue stretch at D255–F444 folds into the GATase cobBQ-type domain. C337 functions as the Nucleophile in the catalytic mechanism. H436 is a catalytic residue.

The protein belongs to the CobB/CobQ family. CobQ subfamily.

It participates in cofactor biosynthesis; adenosylcobalamin biosynthesis. Its function is as follows. Catalyzes amidations at positions B, D, E, and G on adenosylcobyrinic A,C-diamide. NH(2) groups are provided by glutamine, and one molecule of ATP is hydrogenolyzed for each amidation. This chain is Cobyric acid synthase, found in Geobacillus sp. (strain WCH70).